The sequence spans 114 residues: MQDNSIFKNIIQRKIPANIVYQDKKITAFEDIKPKAPVHILIIPNFFISSSNDINKKNKWIMSHMFYIAVKIAKQKKINQEGYRIIINCNEYGGQEINYLHMHLLGGKKLKSFS.

Positions 6–114 (IFKNIIQRKI…LGGKKLKSFS (109 aa)) constitute an HIT domain.

This is an uncharacterized protein from Buchnera aphidicola subsp. Acyrthosiphon pisum (strain APS) (Acyrthosiphon pisum symbiotic bacterium).